The following is a 379-amino-acid chain: Putative acetyl-CoA C-acetyltransferase VraB (379 aa).

C86 functions as the Acyl-thioester intermediate in the catalytic mechanism. The active-site Proton acceptor is H338.

Belongs to the thiolase-like superfamily. Thiolase family.

In Staphylococcus aureus (strain Mu3 / ATCC 700698), this protein is Putative acetyl-CoA C-acetyltransferase VraB (vraB).